The chain runs to 182 residues: Prorelaxin (182 aa).

The first 25 residues, 1-25, serve as a signal peptide directing secretion; sequence MRRLFLSHVLGAWLLLSQLPRELSG. Gln-26 is modified (pyrrolidone carboxylic acid). 3 disulfide bridges follow: Cys-35/Cys-169, Cys-47/Cys-182, and Cys-168/Cys-173. A propeptide spans 54-156 (connecting peptide); the sequence is KTVLRLEEPG…LKNLGLDKHS (103 aa). A propeptide spanning residues 161 to 162 is cleaved from the precursor; that stretch reads MI. Position 163 is a pyrrolidone carboxylic acid (Gln-163).

This sequence belongs to the insulin family. As to quaternary structure, heterodimer of a B chain and an A chain linked by two disulfide bonds.

The protein resides in the secreted. Relaxin is an ovarian hormone that acts with estrogen to produce dilatation of the birth canal in many mammals. In Equus caballus (Horse), this protein is Prorelaxin (RLN).